The chain runs to 619 residues: Protein DFG16 (619 aa).

Residue Met1 is a topological domain, extracellular. A helical transmembrane segment spans residues 2 to 22 (IIRLHFYYLLTLVYHLGLVGA). The Cytoplasmic portion of the chain corresponds to 23–167 (YEKAARKRIQ…KDPFPLGMIM (145 aa)). The segment at 33 to 54 (PPDLIPGPPGHKLGDERPPHYD) is disordered. Basic and acidic residues predominate over residues 44-54 (KLGDERPPHYD). The chain crosses the membrane as a helical span at residues 168–188 (ITFASGCICVATWMLFLVVLL). Topologically, residues 189–203 (LPSDNHNRRNKVVHV) are extracellular. A helical transmembrane segment spans residues 204–224 (YVLFSAIIRTVFLNETIAVIF). The Cytoplasmic segment spans residues 225-291 (DSQYHDDYQD…IPFKMKKGTH (67 aa)). A helical membrane pass occupies residues 292 to 312 (IIITVGCFLSLADNILFANLL). At 313 to 321 (WRKNLVVLK) the chain is on the extracellular side. The helical transmembrane segment at 322–342 (VFYKLIELLIYTIFISIICYF) threads the bilayer. At 343–378 (TWHNFAYILLPKTAEINTDGKCKTKLRILWENYHET) the chain is on the cytoplasmic side. The helical transmembrane segment at 379–399 (IPLLAYNILIFILFYFTTIFF) threads the bilayer. The Extracellular segment spans residues 400 to 410 (AAFTKHVRGWT). A helical transmembrane segment spans residues 411 to 431 (FNFVHLLKVLITVNVWGLIGV). Residues 432 to 619 (LEKRELHISK…NHIYNYENSD (188 aa)) lie on the Cytoplasmic side of the membrane. Composition is skewed to polar residues over residues 485 to 504 (KSNT…SPTW) and 526 to 549 (KFGQ…TLSK). Disordered regions lie at residues 485–506 (KSNT…TWKS) and 520–586 (IMKS…ADKH). Over residues 552 to 561 (QLLRKPRRKT) the composition is skewed to basic residues.

It is found in the membrane. In terms of biological role, involved in invasion during filamentous growth. The polypeptide is Protein DFG16 (DFG16) (Saccharomyces cerevisiae (strain ATCC 204508 / S288c) (Baker's yeast)).